The following is a 91-amino-acid chain: Small ribosomal subunit protein bS20 (91 aa).

The interval 1-23 (MANTPSAKKRAKQAEKRRSHNAS) is disordered. Residues 7–20 (AKKRAKQAEKRRSH) show a composition bias toward basic residues.

It belongs to the bacterial ribosomal protein bS20 family.

Its function is as follows. Binds directly to 16S ribosomal RNA. This chain is Small ribosomal subunit protein bS20, found in Pseudomonas paraeruginosa (strain DSM 24068 / PA7) (Pseudomonas aeruginosa (strain PA7)).